A 124-amino-acid chain; its full sequence is Small ribosomal subunit protein uS12 (124 aa).

Asp-89 carries the post-translational modification 3-methylthioaspartic acid.

It belongs to the universal ribosomal protein uS12 family. In terms of assembly, part of the 30S ribosomal subunit. Contacts proteins S8 and S17. May interact with IF1 in the 30S initiation complex.

In terms of biological role, with S4 and S5 plays an important role in translational accuracy. Interacts with and stabilizes bases of the 16S rRNA that are involved in tRNA selection in the A site and with the mRNA backbone. Located at the interface of the 30S and 50S subunits, it traverses the body of the 30S subunit contacting proteins on the other side and probably holding the rRNA structure together. The combined cluster of proteins S8, S12 and S17 appears to hold together the shoulder and platform of the 30S subunit. This Haemophilus ducreyi (strain 35000HP / ATCC 700724) protein is Small ribosomal subunit protein uS12.